The primary structure comprises 128 residues: Small ribosomal subunit protein bS6 (128 aa).

It belongs to the bacterial ribosomal protein bS6 family.

Binds together with bS18 to 16S ribosomal RNA. The sequence is that of Small ribosomal subunit protein bS6 from Acinetobacter baylyi (strain ATCC 33305 / BD413 / ADP1).